A 333-amino-acid chain; its full sequence is Structure-specific endonuclease subunit SLX1 homolog (333 aa).

Residues aspartate 68–leucine 157 enclose the GIY-YIG domain. The SLX1-type zinc finger occupies cysteine 237 to cysteine 293.

This sequence belongs to the SLX1 family. Forms a heterodimer with a member of the SLX4 family. A divalent metal cation serves as cofactor.

The protein resides in the nucleus. In terms of biological role, catalytic subunit of a heterodimeric structure-specific endonuclease that resolves DNA secondary structures generated during DNA repair and recombination. Has endonuclease activity towards branched DNA substrates, introducing single-strand cuts in duplex DNA close to junctions with ss-DNA. This Brugia malayi (Filarial nematode worm) protein is Structure-specific endonuclease subunit SLX1 homolog.